Reading from the N-terminus, the 101-residue chain is Large ribosomal subunit protein uL23 (101 aa).

Belongs to the universal ribosomal protein uL23 family. As to quaternary structure, part of the 50S ribosomal subunit. Contacts protein L29, and trigger factor when it is bound to the ribosome.

One of the early assembly proteins it binds 23S rRNA. One of the proteins that surrounds the polypeptide exit tunnel on the outside of the ribosome. Forms the main docking site for trigger factor binding to the ribosome. The chain is Large ribosomal subunit protein uL23 from Rhodococcus erythropolis (strain PR4 / NBRC 100887).